The primary structure comprises 443 residues: Probable D-serine dehydratase (443 aa).

Position 106 is an N6-(pyridoxal phosphate)lysine (Lys-106).

The protein belongs to the serine/threonine dehydratase family. DsdA subfamily. Pyridoxal 5'-phosphate is required as a cofactor.

The enzyme catalyses D-serine = pyruvate + NH4(+). The polypeptide is Probable D-serine dehydratase (Cupriavidus pinatubonensis (strain JMP 134 / LMG 1197) (Cupriavidus necator (strain JMP 134))).